Consider the following 148-residue polypeptide: Cytochrome c-552 (148 aa).

An N-terminal signal peptide occupies residues 1–17 (MKRTLMAFLLLGGLALA). Gln-18 carries the post-translational modification Pyrrolidone carboxylic acid. Cys-28, Cys-31, His-32, and Met-86 together coordinate heme c.

Binds 1 heme c group covalently per subunit.

Functionally, this monoheme basic protein appears to function as an electron donor to cytochrome oxidase in T.thermophilus. This is Cytochrome c-552 (cycA) from Thermus thermophilus (strain ATCC 27634 / DSM 579 / HB8).